A 571-amino-acid chain; its full sequence is Proline--tRNA ligase (571 aa).

This sequence belongs to the class-II aminoacyl-tRNA synthetase family. ProS type 1 subfamily. As to quaternary structure, homodimer.

It localises to the cytoplasm. The catalysed reaction is tRNA(Pro) + L-proline + ATP = L-prolyl-tRNA(Pro) + AMP + diphosphate. In terms of biological role, catalyzes the attachment of proline to tRNA(Pro) in a two-step reaction: proline is first activated by ATP to form Pro-AMP and then transferred to the acceptor end of tRNA(Pro). As ProRS can inadvertently accommodate and process non-cognate amino acids such as alanine and cysteine, to avoid such errors it has two additional distinct editing activities against alanine. One activity is designated as 'pretransfer' editing and involves the tRNA(Pro)-independent hydrolysis of activated Ala-AMP. The other activity is designated 'posttransfer' editing and involves deacylation of mischarged Ala-tRNA(Pro). The misacylated Cys-tRNA(Pro) is not edited by ProRS. The polypeptide is Proline--tRNA ligase (Vibrio atlanticus (strain LGP32) (Vibrio splendidus (strain Mel32))).